A 540-amino-acid chain; its full sequence is Glucose-6-phosphate isomerase (540 aa).

The Proton donor role is filled by Glu-350. Residues His-381 and Lys-503 contribute to the active site.

This sequence belongs to the GPI family.

The protein localises to the cytoplasm. The enzyme catalyses alpha-D-glucose 6-phosphate = beta-D-fructose 6-phosphate. It functions in the pathway carbohydrate biosynthesis; gluconeogenesis. The protein operates within carbohydrate degradation; glycolysis; D-glyceraldehyde 3-phosphate and glycerone phosphate from D-glucose: step 2/4. Catalyzes the reversible isomerization of glucose-6-phosphate to fructose-6-phosphate. This chain is Glucose-6-phosphate isomerase, found in Burkholderia lata (strain ATCC 17760 / DSM 23089 / LMG 22485 / NCIMB 9086 / R18194 / 383).